The sequence spans 236 residues: 2,3,4,5-tetrahydropyridine-2,6-dicarboxylate N-acetyltransferase (236 aa).

Belongs to the transferase hexapeptide repeat family. DapH subfamily.

The catalysed reaction is (S)-2,3,4,5-tetrahydrodipicolinate + acetyl-CoA + H2O = L-2-acetamido-6-oxoheptanedioate + CoA. Its pathway is amino-acid biosynthesis; L-lysine biosynthesis via DAP pathway; LL-2,6-diaminopimelate from (S)-tetrahydrodipicolinate (acetylase route): step 1/3. Functionally, catalyzes the transfer of an acetyl group from acetyl-CoA to tetrahydrodipicolinate. The polypeptide is 2,3,4,5-tetrahydropyridine-2,6-dicarboxylate N-acetyltransferase (Clostridium botulinum (strain Langeland / NCTC 10281 / Type F)).